A 132-amino-acid chain; its full sequence is NADPH-dependent 7-cyano-7-deazaguanine reductase (132 aa).

Cys-34 (thioimide intermediate) is an active-site residue. Asp-41 (proton donor) is an active-site residue. Substrate contacts are provided by residues 56–58 and 75–76; these read IEL and HE.

It belongs to the GTP cyclohydrolase I family. QueF type 1 subfamily.

The protein localises to the cytoplasm. It catalyses the reaction 7-aminomethyl-7-carbaguanine + 2 NADP(+) = 7-cyano-7-deazaguanine + 2 NADPH + 3 H(+). It functions in the pathway tRNA modification; tRNA-queuosine biosynthesis. Functionally, catalyzes the NADPH-dependent reduction of 7-cyano-7-deazaguanine (preQ0) to 7-aminomethyl-7-deazaguanine (preQ1). In Vesicomyosocius okutanii subsp. Calyptogena okutanii (strain HA), this protein is NADPH-dependent 7-cyano-7-deazaguanine reductase.